A 1889-amino-acid chain; its full sequence is Protein TIC 214 (1889 aa).

6 helical membrane-spanning segments follow: residues 11-31 (LISL…YYGF), 67-87 (FIAG…HLAL), 88-108 (GKPH…FFWN), 127-147 (LSIQ…HFIL), 175-195 (VGWL…LVWI), and 224-244 (IFSI…PSPI). A compositionally biased stretch (acidic residues) spans 255–265 (PEEVGESEEER). Disordered stretches follow at residues 255–303 (PEEV…PSKE) and 1610–1633 (SNQE…KKKQ). Over residues 279–293 (NQKQGTEENTSSSLF) the composition is skewed to polar residues.

Belongs to the TIC214 family. Part of the Tic complex.

It is found in the plastid. The protein resides in the chloroplast inner membrane. Functionally, involved in protein precursor import into chloroplasts. May be part of an intermediate translocation complex acting as a protein-conducting channel at the inner envelope. This Gossypium barbadense (Sea Island cotton) protein is Protein TIC 214.